Here is a 318-residue protein sequence, read N- to C-terminus: Protein FAM228A (318 aa).

The disordered stretch occupies residues 259-297; it reads SQESKRHEKKGLALGTGQHRPRSWAAGEGQQRRRSQPVD.

It belongs to the FAM228 family.

The chain is Protein FAM228A (FAM228A) from Bos taurus (Bovine).